Reading from the N-terminus, the 182-residue chain is Large ribosomal subunit protein bL17 (182 aa).

The disordered stretch occupies residues 126–182; the sequence is ERANRVAASKAKKAEAEAAEAKAEEAEEAPEVEADTATDKAAEAEAAEAADEAAEDK. A compositionally biased stretch (basic and acidic residues) spans 137–149; that stretch reads KKAEAEAAEAKAE. 2 stretches are compositionally biased toward acidic residues: residues 150–161 and 170–182; these read EAEEAPEVEADT and EAAE…AEDK.

Belongs to the bacterial ribosomal protein bL17 family. As to quaternary structure, part of the 50S ribosomal subunit. Contacts protein L32.

This chain is Large ribosomal subunit protein bL17, found in Corynebacterium jeikeium (strain K411).